The chain runs to 61 residues: Conotoxin Cal14.6 (61 aa).

A signal peptide spans 1–21 (MKFLLFLSVALLLTSFIETEA). Residues 22-38 (GPVNEAGVERLFRALVG) constitute a propeptide that is removed on maturation. A 4-hydroxyproline; partial modification is found at P57. P60 carries the proline amide modification.

Contains 2 disulfide bonds. In terms of tissue distribution, expressed by the venom duct.

Its subcellular location is the secreted. Functionally, probable neurotoxin with unknown target. Possibly targets ion channels. The protein is Conotoxin Cal14.6 of Californiconus californicus (California cone).